The sequence spans 581 residues: Leucine aminopeptidase 3, chloroplastic (581 aa).

Residues 1-50 constitute a chloroplast transit peptide; it reads MAVTLVTSCASSSRFHFRSFSSSPSSLSSCFVRFQLLSRLRVSFAITPLY. Positions 350 and 355 each coordinate Mn(2+). The active site involves Lys362. Asp375, Asp435, and Glu437 together coordinate Mn(2+). The active site involves Arg439.

This sequence belongs to the peptidase M17 family. Homohexamer (dimer of homotrimers). Mn(2+) serves as cofactor.

It localises to the plastid. It is found in the chloroplast. It catalyses the reaction Release of an N-terminal amino acid, Xaa-|-Yaa-, in which Xaa is preferably Leu, but may be other amino acids including Pro although not Arg or Lys, and Yaa may be Pro. Amino acid amides and methyl esters are also readily hydrolyzed, but rates on arylamides are exceedingly low.. The enzyme catalyses Release of N-terminal proline from a peptide.. Functionally, presumably involved in the processing and regular turnover of intracellular proteins. Catalyzes the removal of unsubstituted N-terminal amino acids from various peptides. Possesses Cys-Gly dipeptidase activity. The protein is Leucine aminopeptidase 3, chloroplastic of Arabidopsis thaliana (Mouse-ear cress).